Here is a 429-residue protein sequence, read N- to C-terminus: S-adenosylmethionine synthase (429 aa).

Glu9 is a binding site for Mg(2+). His15 contributes to the ATP binding site. Glu43 serves as a coordination point for K(+). L-methionine-binding residues include Glu56 and Gln99. Residues 167-169 (DGK), 235-238 (SGRF), Asp246, 252-253 (RK), Ala269, Lys273, and Lys277 contribute to the ATP site. Residue Asp246 participates in L-methionine binding. Lys277 is an L-methionine binding site.

It belongs to the AdoMet synthase family. As to quaternary structure, homotetramer. Requires Mn(2+) as cofactor. Mg(2+) serves as cofactor. The cofactor is Co(2+). K(+) is required as a cofactor.

The protein localises to the cytoplasm. The enzyme catalyses L-methionine + ATP + H2O = S-adenosyl-L-methionine + phosphate + diphosphate. It functions in the pathway amino-acid biosynthesis; S-adenosyl-L-methionine biosynthesis; S-adenosyl-L-methionine from L-methionine: step 1/1. In terms of biological role, catalyzes the formation of S-adenosylmethionine from methionine and ATP. The reaction comprises two steps that are both catalyzed by the same enzyme: formation of S-adenosylmethionine (AdoMet) and triphosphate, and subsequent hydrolysis of the triphosphate. The chain is S-adenosylmethionine synthase (SAMS) from Carica papaya (Papaya).